An 850-amino-acid polypeptide reads, in one-letter code: Lon protease (850 aa).

The 195-residue stretch at 38-232 (LPVLPLRDVV…LLVGLVDGEI (195 aa)) folds into the Lon N-terminal domain. 384–391 (GPPGVGKT) serves as a coordination point for ATP. One can recognise a Lon proteolytic domain in the interval 634-815 (ENEIGLVTGL…DEVLDLALER (182 aa)). Catalysis depends on residues serine 721 and lysine 764. The tract at residues 819-850 (PKKAGKEKARKTAPRVAVRGKSRSTPGTRVKH) is disordered. Residues 821–840 (KAGKEKARKTAPRVAVRGKS) are compositionally biased toward basic residues. Positions 841–850 (RSTPGTRVKH) are enriched in polar residues.

This sequence belongs to the peptidase S16 family. In terms of assembly, homohexamer. Organized in a ring with a central cavity.

The protein resides in the cytoplasm. It catalyses the reaction Hydrolysis of proteins in presence of ATP.. In terms of biological role, ATP-dependent serine protease that mediates the selective degradation of mutant and abnormal proteins as well as certain short-lived regulatory proteins. Required for cellular homeostasis and for survival from DNA damage and developmental changes induced by stress. Degrades polypeptides processively to yield small peptide fragments that are 5 to 10 amino acids long. Binds to DNA in a double-stranded, site-specific manner. The protein is Lon protease of Xanthomonas oryzae pv. oryzae (strain KACC10331 / KXO85).